The sequence spans 462 residues: Protein ultraspiracle homolog (462 aa).

Residues 1 to 113 are modulating; the sequence is MSSVAKKDKR…NHPLSGSKHL (113 aa). NR C4-type zinc fingers lie at residues 114-134 and 150-174; these read CSIC…CEGC and CRED…YQKC. The nuclear receptor DNA-binding region spans 114-179; the sequence is CSICGDRASG…RYQKCLACGM (66 aa). The hinge stretch occupies residues 180-201; the sequence is KREAVQEERQRAARRTEDAHPS. Residues 204–453 enclose the NR LBD domain; the sequence is VQELSIERLL…SYIRDALCNH (250 aa).

It belongs to the nuclear hormone receptor family. NR2 subfamily. In terms of assembly, heterodimer of USP and ECR. Abundant expression seen in males and ovaries.

The protein localises to the nucleus. The sequence is that of Protein ultraspiracle homolog (USP) from Bombyx mori (Silk moth).